The following is a 143-amino-acid chain: Histone H2B (143 aa).

A disordered region spans residues 1-52; sequence MAPKPASTAGKAPASTASKAPVKSDAAKTASKSKVSSGADGEKKKRKKTRKE. Lysine 11 carries the N6-acetyllysine; alternate modification. Lysine 11 is covalently cross-linked (Glycyl lysine isopeptide (Lys-Gly) (interchain with G-Cter in SUMO); alternate). The residue at position 15 (serine 15) is a Phosphoserine. At lysine 19 the chain carries N6-acetyllysine. A compositionally biased stretch (low complexity) spans 23-39; the sequence is KSDAAKTASKSKVSSGA. A Glycyl lysine isopeptide (Lys-Gly) (interchain with G-Cter in ubiquitin) cross-link involves residue lysine 137.

Belongs to the histone H2B family. The nucleosome is a histone octamer containing two molecules each of H2A, H2B, H3 and H4 assembled in one H3-H4 heterotetramer and two H2A-H2B heterodimers. The octamer wraps approximately 147 bp of DNA. In terms of processing, monoubiquitinated to form H2BK123ub1. H2BK123ub1 gives a specific tag for epigenetic transcriptional activation and is also prerequisite for H3K4me and H3K79me formation. H2BK123ub1 also modulates the formation of double-strand breaks during meiosis and is a prerequisite for DNA-damage checkpoint activation. Post-translationally, phosphorylated to form H2BS10ph during progression through meiotic prophase. May be correlated with chromosome condensation. Acetylation of N-terminal lysines and particularly formation of H2BK11ac has a positive effect on transcription. In terms of processing, sumoylation to form H2BK6su occurs preferentially near the telomeres and represses gene transcription.

The protein localises to the nucleus. Its subcellular location is the chromosome. Core component of nucleosome. Nucleosomes wrap and compact DNA into chromatin, limiting DNA accessibility to the cellular machineries which require DNA as a template. Histones thereby play a central role in transcription regulation, DNA repair, DNA replication and chromosomal stability. DNA accessibility is regulated via a complex set of post-translational modifications of histones, also called histone code, and nucleosome remodeling. The chain is Histone H2B (htbA) from Agaricus bisporus (White button mushroom).